A 98-amino-acid polypeptide reads, in one-letter code: NADH-ubiquinone oxidoreductase chain 4L (98 aa).

3 consecutive transmembrane segments (helical) span residues 1 to 21 (MPPI…GLLM), 29 to 49 (SLLC…ILSL), and 61 to 81 (IILL…LVMI).

It belongs to the complex I subunit 4L family. As to quaternary structure, core subunit of respiratory chain NADH dehydrogenase (Complex I) which is composed of 45 different subunits.

It is found in the mitochondrion inner membrane. It carries out the reaction a ubiquinone + NADH + 5 H(+)(in) = a ubiquinol + NAD(+) + 4 H(+)(out). Its function is as follows. Core subunit of the mitochondrial membrane respiratory chain NADH dehydrogenase (Complex I) which catalyzes electron transfer from NADH through the respiratory chain, using ubiquinone as an electron acceptor. Part of the enzyme membrane arm which is embedded in the lipid bilayer and involved in proton translocation. This is NADH-ubiquinone oxidoreductase chain 4L (MT-ND4L) from Galeopterus variegatus (Malayan flying lemur).